The primary structure comprises 328 residues: Malate dehydrogenase (328 aa).

Glycine 12 to glycine 18 lines the NAD(+) pocket. Residues arginine 95 and arginine 101 each coordinate substrate. NAD(+)-binding positions include asparagine 108, glutamine 115, and valine 132–asparagine 134. Positions 134 and 165 each coordinate substrate. Histidine 190 functions as the Proton acceptor in the catalytic mechanism.

It belongs to the LDH/MDH superfamily. MDH type 2 family.

The enzyme catalyses (S)-malate + NAD(+) = oxaloacetate + NADH + H(+). In terms of biological role, catalyzes the reversible oxidation of malate to oxaloacetate. This chain is Malate dehydrogenase, found in Acidovorax ebreus (strain TPSY) (Diaphorobacter sp. (strain TPSY)).